The sequence spans 110 residues: Methionine-R-sulfoxide reductase B1-A (110 aa).

Positions 1–104 (MSFCSFSGGE…FSSSLKFIPK (104 aa)) constitute a MsrB domain. Zn(2+) contacts are provided by Cys23, Cys26, Cys69, and Cys72. The Nucleophile role is filled by Sec93. Position 93 (Sec93) is a non-standard amino acid, selenocysteine.

Belongs to the MsrB Met sulfoxide reductase family. Requires Zn(2+) as cofactor. In the embryo, expressed in the polster, paraxial mesoderm, tectum, otic vesicle and liver.

The protein resides in the cytoplasm. The protein localises to the nucleus. It localises to the cytoskeleton. The enzyme catalyses L-methionyl-[protein] + [thioredoxin]-disulfide + H2O = L-methionyl-(R)-S-oxide-[protein] + [thioredoxin]-dithiol. It carries out the reaction [thioredoxin]-disulfide + L-methionine + H2O = L-methionine (R)-S-oxide + [thioredoxin]-dithiol. Functionally, methionine-sulfoxide reductase that specifically reduces methionine (R)-sulfoxide back to methionine. While in many cases, methionine oxidation is the result of random oxidation following oxidative stress, methionine oxidation is also a post-translational modification that takes place on specific residue. Acts as a regulator of actin assembly by reducing methionine (R)-sulfoxide mediated by MICALs (mical1, mical2 or mical3) on actin, thereby promoting filament repolymerization. Plays a role in innate immunity by reducing oxidized actin, leading to actin repolymerization in macrophages. This Danio rerio (Zebrafish) protein is Methionine-R-sulfoxide reductase B1-A (msrb1).